Reading from the N-terminus, the 427-residue chain is Cholecystokinin receptor type A (427 aa).

The Extracellular portion of the chain corresponds to 1–41 (MDAVASLLGNASGIPPPCELGLDNETLFCLDQPPPSKEWQP). N-linked (GlcNAc...) asparagine glycans are attached at residues N10 and N24. A disulfide bridge connects residues C18 and C29. A helical membrane pass occupies residues 42-67 (AVQILLYSLIFLLSVLGNTLVITVLI). Over 68–77 (RNKRMRTVTN) the chain is Cytoplasmic. Residues 78–104 (IFLLSLAISDLMLCLFCMPFNLIPNLL) form a helical membrane-spanning segment. The Extracellular portion of the chain corresponds to 105 to 115 (KDFIFGSALCK). C114 and C196 are joined by a disulfide. Residues 116-137 (TTTYLMGTSVSVSTLNLVAISL) form a helical membrane-spanning segment. The Cytoplasmic segment spans residues 138–157 (ERYGAICKPLQSRVWQTKSH). Residues 158–178 (ALKVIAATWCLSFAIMTPYPI) form a helical membrane-spanning segment. The Extracellular segment spans residues 179–210 (YSNLVPFTKTNNQTANMCRFLLPSDVMQQAWH). N190 is a glycosylation site (N-linked (GlcNAc...) asparagine). The chain crosses the membrane as a helical span at residues 211–234 (TFLLLILFLIPGIVMMVAYGMISL). Topologically, residues 235–312 (ELYQGIKFDA…TLMAKKRVIR (78 aa)) are cytoplasmic. Residues 313–333 (MLMVIVVLFFLCWMPIFSANA) form a helical membrane-spanning segment. At 334–348 (WRAYDTVSAERRLSG) the chain is on the extracellular side. Residues 349-372 (TPISFILLLSYTSSCVNPIIYCFM) form a helical membrane-spanning segment. At 373–427 (NRRFRLGFMATFPCCPNPGPPGPRAEAGEEEEGRTTRASLSRYSYSHMSASAPPS) the chain is on the cytoplasmic side. C386 is lipidated: S-palmitoyl cysteine. The interval 391–427 (GPPGPRAEAGEEEEGRTTRASLSRYSYSHMSASAPPS) is disordered. The segment covering 411-421 (SLSRYSYSHMS) has biased composition (polar residues).

It belongs to the G-protein coupled receptor 1 family.

It is found in the cell membrane. Receptor for cholecystokinin. Mediates pancreatic growth and enzyme secretion, smooth muscle contraction of the gall bladder and stomach. Has a 1000-fold higher affinity for CCK rather than for gastrin. It modulates feeding and dopamine-induced behavior in the central and peripheral nervous system. This receptor mediates its action by association with G proteins that activate a phosphatidylinositol-calcium second messenger system. This is Cholecystokinin receptor type A (CCKAR) from Oryctolagus cuniculus (Rabbit).